The following is a 724-amino-acid chain: Catalase-peroxidase (724 aa).

Residues 1 to 26 (MDENKTKPTGKCPVMHGGNTSTGSSN) are disordered. A cross-link (tryptophyl-tyrosyl-methioninium (Trp-Tyr) (with M-251)) is located at residues 98–225 (WHSAGSYRTT…LAAVQMGLIY (128 aa)). His99 functions as the Proton acceptor in the catalytic mechanism. A cross-link (tryptophyl-tyrosyl-methioninium (Tyr-Met) (with W-98)) is located at residues 225 to 251 (YVNPEGVDGKSDPLRTAQDMRVTFSRM). A heme b-binding site is contributed by His266.

Belongs to the peroxidase family. Peroxidase/catalase subfamily. Homodimer or homotetramer. Heme b is required as a cofactor. In terms of processing, formation of the three residue Trp-Tyr-Met cross-link is important for the catalase, but not the peroxidase activity of the enzyme.

It carries out the reaction H2O2 + AH2 = A + 2 H2O. It catalyses the reaction 2 H2O2 = O2 + 2 H2O. In terms of biological role, bifunctional enzyme with both catalase and broad-spectrum peroxidase activity. The chain is Catalase-peroxidase from Pectobacterium atrosepticum (strain SCRI 1043 / ATCC BAA-672) (Erwinia carotovora subsp. atroseptica).